We begin with the raw amino-acid sequence, 71 residues long: Palustrin-2AJ2 (71 aa).

An N-terminal signal peptide occupies residues 1–22 (MFTLKKPLLVLLFLGTVSLSLC). The propeptide occupies 23 to 40 (EQERAADDDEGEVIEEEV). Cysteines 65 and 71 form a disulfide.

In terms of tissue distribution, expressed by the skin glands.

Its subcellular location is the secreted. Functionally, displays broad-spectrum antibacterial activity against a range of Gram-positive and Gram-negative bacteria. Has low hemolytic activity, low cytotoxicity and low antioxidant activity. This Amolops jingdongensis (Chinese torrent frog) protein is Palustrin-2AJ2.